Reading from the N-terminus, the 298-residue chain is 4-hydroxy-tetrahydrodipicolinate synthase (298 aa).

Thr48 serves as a coordination point for pyruvate. Tyr137 (proton donor/acceptor) is an active-site residue. The Schiff-base intermediate with substrate role is filled by Lys166. Ile207 is a binding site for pyruvate.

This sequence belongs to the DapA family. Homotetramer; dimer of dimers.

It localises to the cytoplasm. It carries out the reaction L-aspartate 4-semialdehyde + pyruvate = (2S,4S)-4-hydroxy-2,3,4,5-tetrahydrodipicolinate + H2O + H(+). Its pathway is amino-acid biosynthesis; L-lysine biosynthesis via DAP pathway; (S)-tetrahydrodipicolinate from L-aspartate: step 3/4. In terms of biological role, catalyzes the condensation of (S)-aspartate-beta-semialdehyde [(S)-ASA] and pyruvate to 4-hydroxy-tetrahydrodipicolinate (HTPA). The protein is 4-hydroxy-tetrahydrodipicolinate synthase of Campylobacter jejuni subsp. jejuni serotype O:2 (strain ATCC 700819 / NCTC 11168).